The primary structure comprises 828 residues: Isethionate sulfite-lyase (828 aa).

Residues 30-698 (ERVFTILESF…VVSATPNGRK (669 aa)) enclose the PFL domain. 2-hydroxyethane-1-sulfonate is bound by residues R187, Q191, 466-468 (CTE), and R676. Catalysis depends on C466, which acts as the Cysteine radical intermediate. The Proton acceptor role is filled by E468. In terms of domain architecture, Glycine radical spans 705 to 828 (DGSSASHGAD…LIARTGHDVM (124 aa)). Glycine radical is present on G803.

The protein belongs to the glycyl radical enzyme (GRE) family. Homodimer. In terms of processing, requires the activating protein IseH to generate the key active site glycyl radical on Gly-803 that is involved in catalysis.

The catalysed reaction is 2-hydroxyethane-1-sulfonate = acetaldehyde + sulfite + H(+). The protein operates within organosulfur degradation; alkanesulfonate degradation. Involved in an anaerobic respiration pathway that converts the sulfonate isethionate (2-hydroxyethanesulfonate) to ammonia, acetate and sulfide. Catalyzes the radical-mediated C-S bond cleavage of isethionate (2-hydroxyethanesulfonate) to form sulfite and acetaldehyde. Shows no activity with taurine or ethanolamine as substrates. This is Isethionate sulfite-lyase from Nitratidesulfovibrio vulgaris (strain ATCC 29579 / DSM 644 / CCUG 34227 / NCIMB 8303 / VKM B-1760 / Hildenborough) (Desulfovibrio vulgaris).